The chain runs to 417 residues: Gamma-glutamyl phosphate reductase (417 aa).

This sequence belongs to the gamma-glutamyl phosphate reductase family.

Its subcellular location is the cytoplasm. It catalyses the reaction L-glutamate 5-semialdehyde + phosphate + NADP(+) = L-glutamyl 5-phosphate + NADPH + H(+). It functions in the pathway amino-acid biosynthesis; L-proline biosynthesis; L-glutamate 5-semialdehyde from L-glutamate: step 2/2. Functionally, catalyzes the NADPH-dependent reduction of L-glutamate 5-phosphate into L-glutamate 5-semialdehyde and phosphate. The product spontaneously undergoes cyclization to form 1-pyrroline-5-carboxylate. The sequence is that of Gamma-glutamyl phosphate reductase from Polynucleobacter asymbioticus (strain DSM 18221 / CIP 109841 / QLW-P1DMWA-1) (Polynucleobacter necessarius subsp. asymbioticus).